The primary structure comprises 270 residues: uncharacterized protein (270 aa).

Belongs to the GSP E family.

This is an uncharacterized protein from Methanocaldococcus jannaschii (strain ATCC 43067 / DSM 2661 / JAL-1 / JCM 10045 / NBRC 100440) (Methanococcus jannaschii).